The primary structure comprises 372 residues: Putative isochorismate synthase MenF (372 aa).

The Proton acceptor role is filled by K119. Residue E175 is the Proton donor of the active site. Mg(2+)-binding residues include E219 and E356.

Belongs to the isochorismate synthase family. Mg(2+) is required as a cofactor.

The catalysed reaction is chorismate = isochorismate. The protein operates within quinol/quinone metabolism; 1,4-dihydroxy-2-naphthoate biosynthesis; 1,4-dihydroxy-2-naphthoate from chorismate: step 1/7. Its pathway is quinol/quinone metabolism; menaquinone biosynthesis. Functionally, catalyzes the conversion of chorismate to isochorismate. The polypeptide is Putative isochorismate synthase MenF (menF) (Mycobacterium tuberculosis (strain CDC 1551 / Oshkosh)).